A 151-amino-acid polypeptide reads, in one-letter code: Putative phosphatidylglycerol/phosphatidylinositol transfer protein 3 (151 aa).

Residues methionine 1 to serine 26 form the signal peptide.

Belongs to the NPC2 family. Monomer.

Functionally, catalyzes the intermembrane transfer of phosphatidylglycerol and phosphatidylinositol. In Dictyostelium discoideum (Social amoeba), this protein is Putative phosphatidylglycerol/phosphatidylinositol transfer protein 3.